The following is a 912-amino-acid chain: Probable dipeptidyl-aminopeptidase B (912 aa).

A disordered region spans residues 1-74 (MSSALSPEGD…GPFLGPGASL (74 aa)). Topologically, residues 1 to 85 (MSSALSPEGD…REPMDRGLRR (85 aa)) are cytoplasmic. Residues 16–27 (DSLSSVSTTSLV) show a composition bias toward low complexity. The span at 30–50 (RIQEKTEMDADNDKEKDPRAL) shows a compositional bias: basic and acidic residues. The span at 51–63 (DDEDPLRDEDDLE) shows a compositional bias: acidic residues. Residues 86–106 (ILIIVAVVFIGGWLAGLGIFI) traverse the membrane as a helical; Signal-anchor for type II membrane protein segment. The Vacuolar segment spans residues 107 to 912 (ASGSYHHESD…KRHMVPQALV (806 aa)). Asn-344 is a glycosylation site (N-linked (GlcNAc...) asparagine). Ser-749 functions as the Charge relay system in the catalytic mechanism. An N-linked (GlcNAc...) asparagine glycan is attached at Asn-808. Catalysis depends on charge relay system residues Asp-826 and His-859. The interval 892 to 912 (PQPQKDPVEKEKRHMVPQALV) is disordered.

It belongs to the peptidase S9B family.

The protein resides in the vacuole membrane. The enzyme catalyses Release of an N-terminal dipeptide, Xaa-Yaa-|-Zaa-, from a polypeptide, preferentially when Yaa is Pro, provided Zaa is neither Pro nor hydroxyproline.. In terms of biological role, type IV dipeptidyl-peptidase which removes N-terminal dipeptides sequentially from polypeptides having unsubstituted N-termini provided that the penultimate residue is proline. The sequence is that of Probable dipeptidyl-aminopeptidase B (DAPB) from Fusarium vanettenii (strain ATCC MYA-4622 / CBS 123669 / FGSC 9596 / NRRL 45880 / 77-13-4) (Fusarium solani subsp. pisi).